Reading from the N-terminus, the 334-residue chain is MLSRVAKRAFSSTVANPYKVTVLGAGGGIGQPLSLLLKLNHKVTDLRLYDLKGAKGVATDLSHIPTNSVVKGFTPEEPDGLNNALKDTDMVLIPAGVPRKPGMTRDDLFAINASIVRDLAAATAESAPNAAILVISNPVNSTVPIVAQVLKNKGVYNPKKLFGVTTLDSIRAARFISEVENTDPTQERVNVIGGHSGITIIPLISQTNHKLMSDDKRHELIHRIQFGGDEVVKAKNGAGSATLSMAHAGAKFANAVLSGFKGERDVIEPSFVDSPLFKSEGIEFFASPVTLGPDGIEKIHPIGELSSEEEEMLQKCKETLKKNIEKGVNFVASK.

The N-terminal 17 residues, 1 to 17 (MLSRVAKRAFSSTVANP), are a transit peptide targeting the mitochondrion. Residues 24–30 (GAGGGIG) and aspartate 50 contribute to the NAD(+) site. The substrate site is built by arginine 99 and arginine 105. NAD(+) contacts are provided by residues asparagine 112 and 135 to 137 (ISN). Residues asparagine 137 and arginine 171 each coordinate substrate. Serine 177 is modified (phosphoserine). The active-site Proton acceptor is histidine 195. Residue threonine 199 is modified to Phosphothreonine. Residue methionine 245 coordinates NAD(+).

The protein belongs to the LDH/MDH superfamily. MDH type 1 family. Homodimer.

It is found in the mitochondrion matrix. The enzyme catalyses (S)-malate + NAD(+) = oxaloacetate + NADH + H(+). This is Malate dehydrogenase, mitochondrial (MDH1) from Saccharomyces cerevisiae (strain ATCC 204508 / S288c) (Baker's yeast).